The chain runs to 336 residues: Ferredoxin--NADP reductase (336 aa).

The FAD site is built by E34, Q42, Y47, V87, F121, D286, and S326.

Belongs to the ferredoxin--NADP reductase type 2 family. As to quaternary structure, homodimer. Requires FAD as cofactor.

It catalyses the reaction 2 reduced [2Fe-2S]-[ferredoxin] + NADP(+) + H(+) = 2 oxidized [2Fe-2S]-[ferredoxin] + NADPH. The sequence is that of Ferredoxin--NADP reductase from Leuconostoc mesenteroides subsp. mesenteroides (strain ATCC 8293 / DSM 20343 / BCRC 11652 / CCM 1803 / JCM 6124 / NCDO 523 / NBRC 100496 / NCIMB 8023 / NCTC 12954 / NRRL B-1118 / 37Y).